The chain runs to 145 residues: U1 small nuclear ribonucleoprotein C (145 aa).

The Matrin-type zinc-finger motif lies at 4–36 (YYCDYCDTYLTHDSPSVRKTHCTGRKHRDNVKF). Positions 67–91 (FAGGPGGAPPKPAGVSIPPPNMGAP) are disordered. Positions 73–91 (GAPPKPAGVSIPPPNMGAP) are enriched in pro residues.

This sequence belongs to the U1 small nuclear ribonucleoprotein C family. In terms of assembly, U1 snRNP is composed of the 7 core Sm proteins B/B', D1, D2, D3, E, F and G that assemble in a heptameric protein ring on the Sm site of the small nuclear RNA to form the core snRNP, and at least 3 U1 snRNP-specific proteins U1-70K, U1-A and U1-C. U1-C interacts with U1 snRNA and the 5' splice-site region of the pre-mRNA.

Its subcellular location is the nucleus. Its function is as follows. Component of the spliceosomal U1 snRNP, which is essential for recognition of the pre-mRNA 5' splice-site and the subsequent assembly of the spliceosome. U1-C is directly involved in initial 5' splice-site recognition for both constitutive and regulated alternative splicing. The interaction with the 5' splice-site seems to precede base-pairing between the pre-mRNA and the U1 snRNA. Stimulates commitment or early (E) complex formation by stabilizing the base pairing of the 5' end of the U1 snRNA and the 5' splice-site region. Regulates alternative splicing of a distinct group of target genes. This is U1 small nuclear ribonucleoprotein C from Drosophila melanogaster (Fruit fly).